The chain runs to 406 residues: Olfactomedin-like protein 3 (406 aa).

A signal peptide spans 1 to 21 (MGPSAPLLLFFLLSWPGSLQG). The stretch at 22–101 (QQHHLVEYME…REVDYLETQN (80 aa)) forms a coiled coil. Positions 134–401 (DCSYTISQVR…QIVYKLEMKK (268 aa)) constitute an Olfactomedin-like domain. Cysteine 135 and cysteine 328 are disulfide-bonded. N-linked (GlcNAc...) asparagine glycosylation is present at asparagine 248.

It belongs to the OLFML3 family.

It is found in the secreted. Secreted scaffold protein that plays an essential role in dorsoventral patterning during early development. Stabilizes axial formation by restricting chordin (CHRD) activity on the dorsal side. Acts by facilitating the association between the tolloid proteases and their substrate chordin (CHRD), leading to enhance chordin (CHRD) degradation. May have matrix-related function involved in placental and embryonic development, or play a similar role in other physiological processes. The protein is Olfactomedin-like protein 3 (Olfml3) of Rattus norvegicus (Rat).